The sequence spans 185 residues: RRM domain-containing protein ECU09_1470 (185 aa).

RRM domains lie at 8-87 and 101-170; these read NQLA…YAKR and KKVY…PAYE.

The sequence is that of RRM domain-containing protein ECU09_1470 from Encephalitozoon cuniculi (strain GB-M1) (Microsporidian parasite).